Here is a 296-residue protein sequence, read N- to C-terminus: 4-amino-4-deoxyprephenate dehydrogenase (296 aa).

One can recognise a Prephenate/arogenate dehydrogenase domain in the interval 9–288 (RCVVVGGAGA…EHGAELERLC (280 aa)).

Belongs to the prephenate/arogenate dehydrogenase family.

It carries out the reaction 4-amino-4-deoxyprephenate + NAD(+) = 3-(4-aminophenyl)pyruvate + CO2 + NADH + H(+). Its pathway is antibiotic biosynthesis. In terms of biological role, involved in pristinamycin I biosynthesis. Probably catalyzes the formation of 3-(4-aminophenyl)pyruvate from 4-amino-4-deoxyprephenate. This is 4-amino-4-deoxyprephenate dehydrogenase from Streptomyces pristinaespiralis.